A 75-amino-acid chain; its full sequence is Sec-independent protein translocase protein TatA (75 aa).

Residues 1–21 (MGSFSIWHWLIVLVIVLLVFG) form a helical membrane-spanning segment. The segment at 41-75 (KGMHDDDKPAGKLGDDSRSAEQAREAQAERDRDAR) is disordered.

Belongs to the TatA/E family. As to quaternary structure, the Tat system comprises two distinct complexes: a TatABC complex, containing multiple copies of TatA, TatB and TatC subunits, and a separate TatA complex, containing only TatA subunits. Substrates initially bind to the TatABC complex, which probably triggers association of the separate TatA complex to form the active translocon.

The protein localises to the cell inner membrane. Functionally, part of the twin-arginine translocation (Tat) system that transports large folded proteins containing a characteristic twin-arginine motif in their signal peptide across membranes. TatA could form the protein-conducting channel of the Tat system. This chain is Sec-independent protein translocase protein TatA, found in Xanthomonas campestris pv. campestris (strain 8004).